The primary structure comprises 219 residues: tRNA (guanine-N(7)-)-methyltransferase (219 aa).

The S-adenosyl-L-methionine site is built by Glu-43, Asp-68, Glu-101, and Asn-124. Substrate-binding residues include Lys-128 and Asp-160.

This sequence belongs to the class I-like SAM-binding methyltransferase superfamily. TrmB family.

It catalyses the reaction guanosine(46) in tRNA + S-adenosyl-L-methionine = N(7)-methylguanosine(46) in tRNA + S-adenosyl-L-homocysteine. It functions in the pathway tRNA modification; N(7)-methylguanine-tRNA biosynthesis. In terms of biological role, catalyzes the formation of N(7)-methylguanine at position 46 (m7G46) in tRNA. This Clostridium botulinum (strain Alaska E43 / Type E3) protein is tRNA (guanine-N(7)-)-methyltransferase.